Consider the following 419-residue polypeptide: Large ribosomal subunit protein uL4 (419 aa).

Residue Ala-2 is modified to N-acetylalanine. The residue at position 14 (Lys-14) is an N6-acetyllysine. Arg-97 bears the Omega-N-methylarginine mark. Lys-106 carries the post-translational modification N6-acetyllysine. Residue Lys-239 forms a Glycyl lysine isopeptide (Lys-Gly) (interchain with G-Cter in SUMO2) linkage. The residue at position 259 (Lys-259) is an N6-acetyllysine. Thr-266 bears the Phosphothreonine mark. Phosphoserine occurs at positions 290 and 295. A Citrulline modification is found at Arg-300. A Glycyl lysine isopeptide (Lys-Gly) (interchain with G-Cter in SUMO2) cross-link involves residue Lys-327. An N6-acetyllysine mark is found at Lys-333 and Lys-353. Residue Lys-364 is modified to N6-acetyllysine; alternate. A Glycyl lysine isopeptide (Lys-Gly) (interchain with G-Cter in SUMO1); alternate cross-link involves residue Lys-364. Residues 364–379 (KSEKVVPEKGTADKKP) show a composition bias toward basic and acidic residues. The segment at 364–419 (KSEKVVPEKGTADKKPAVGKKGKKVDAKKQKPAGKKVVAKKPAEKKPTTEEKKPAA) is disordered. The residue at position 365 (Ser-365) is a Phosphoserine. Over residues 393–402 (QKPAGKKVVA) the composition is skewed to basic residues. Over residues 404 to 419 (KPAEKKPTTEEKKPAA) the composition is skewed to basic and acidic residues.

The protein belongs to the universal ribosomal protein uL4 family. As to quaternary structure, component of the large ribosomal subunit. May bind IPO9 with low affinity. Interacts with RBM3. In terms of processing, citrullinated by PADI4.

It localises to the cytoplasm. Functionally, component of the large ribosomal subunit. The ribosome is a large ribonucleoprotein complex responsible for the synthesis of proteins in the cell. In Mus musculus (Mouse), this protein is Large ribosomal subunit protein uL4 (Rpl4).